Consider the following 219-residue polypeptide: OVARIAN TUMOR DOMAIN-containing deubiquitinating enzyme 12 (219 aa).

Residues 79-203 (LCELKVSGDG…EVHYNSLYDI (125 aa)) enclose the OTU domain. Residue Asp87 is part of the active site. The Nucleophile role is filled by Cys90. His196 is an active-site residue.

This sequence belongs to the peptidase C85 family.

The enzyme catalyses Thiol-dependent hydrolysis of ester, thioester, amide, peptide and isopeptide bonds formed by the C-terminal Gly of ubiquitin (a 76-residue protein attached to proteins as an intracellular targeting signal).. In terms of biological role, hydrolase that can remove conjugated ubiquitin from proteins in vitro and may therefore play an important regulatory role at the level of protein turnover by preventing degradation. Inactive cysteine protease. This Arabidopsis thaliana (Mouse-ear cress) protein is OVARIAN TUMOR DOMAIN-containing deubiquitinating enzyme 12.